Here is a 549-residue protein sequence, read N- to C-terminus: Glucose-6-phosphate isomerase (549 aa).

Glu-353 functions as the Proton donor in the catalytic mechanism. Active-site residues include His-384 and Lys-513.

Belongs to the GPI family.

It is found in the cytoplasm. It catalyses the reaction alpha-D-glucose 6-phosphate = beta-D-fructose 6-phosphate. Its pathway is carbohydrate biosynthesis; gluconeogenesis. It functions in the pathway carbohydrate degradation; glycolysis; D-glyceraldehyde 3-phosphate and glycerone phosphate from D-glucose: step 2/4. Its function is as follows. Catalyzes the reversible isomerization of glucose-6-phosphate to fructose-6-phosphate. This Brucella anthropi (strain ATCC 49188 / DSM 6882 / CCUG 24695 / JCM 21032 / LMG 3331 / NBRC 15819 / NCTC 12168 / Alc 37) (Ochrobactrum anthropi) protein is Glucose-6-phosphate isomerase.